We begin with the raw amino-acid sequence, 160 residues long: Large ribosomal subunit protein eL21 (160 aa).

This sequence belongs to the eukaryotic ribosomal protein eL21 family. In terms of assembly, component of the large ribosomal subunit. Mature ribosomes consist of a small (40S) and a large (60S) subunit. The 40S subunit contains about 32 different proteins and 1 molecule of RNA (18S). The 60S subunit contains 45 different proteins and 3 molecules of RNA (25S, 5.8S and 5S).

The protein resides in the cytoplasm. Its function is as follows. Component of the ribosome, a large ribonucleoprotein complex responsible for the synthesis of proteins in the cell. The small ribosomal subunit (SSU) binds messenger RNAs (mRNAs) and translates the encoded message by selecting cognate aminoacyl-transfer RNA (tRNA) molecules. The large subunit (LSU) contains the ribosomal catalytic site termed the peptidyl transferase center (PTC), which catalyzes the formation of peptide bonds, thereby polymerizing the amino acids delivered by tRNAs into a polypeptide chain. The nascent polypeptides leave the ribosome through a tunnel in the LSU and interact with protein factors that function in enzymatic processing, targeting, and the membrane insertion of nascent chains at the exit of the ribosomal tunnel. The polypeptide is Large ribosomal subunit protein eL21 (Candida albicans (strain SC5314 / ATCC MYA-2876) (Yeast)).